Consider the following 175-residue polypeptide: Bifunctional protein PyrR (175 aa).

A PRPP-binding motif is present at residues 98 to 110; that stretch reads VIIIDDVLYTGRT.

This sequence belongs to the purine/pyrimidine phosphoribosyltransferase family. PyrR subfamily. Homodimer and homohexamer; in equilibrium.

The catalysed reaction is UMP + diphosphate = 5-phospho-alpha-D-ribose 1-diphosphate + uracil. In terms of biological role, regulates transcriptional attenuation of the pyrimidine nucleotide (pyr) operon by binding in a uridine-dependent manner to specific sites on pyr mRNA. This disrupts an antiterminator hairpin in the RNA and favors formation of a downstream transcription terminator, leading to a reduced expression of downstream genes. Its function is as follows. Also displays a weak uracil phosphoribosyltransferase activity which is not physiologically significant. In Staphylococcus aureus (strain bovine RF122 / ET3-1), this protein is Bifunctional protein PyrR.